Here is a 386-residue protein sequence, read N- to C-terminus: Indole-3-acetate O-methyltransferase 1 (386 aa).

Tyr30 serves as a coordination point for S-adenosyl-L-methionine. Substrate contacts are provided by residues Tyr30 and 33-37; that span reads NSQAQ. Residues Gly72, 72–73, Asn78, 108–111, Asp110, 152–154, and 169–171 each bind S-adenosyl-L-methionine; these read GC, FSDL, SFY, and AFS. A substrate-binding site is contributed by 170-174; sequence FSLHW. Mg(2+) contacts are provided by Asn191, Val195, Arg277, Asp278, Phe280, and Asn281. Ser334 provides a ligand contact to substrate.

The protein belongs to the methyltransferase superfamily. SABATH family. Homodimer. The cofactor is Mg(2+). Expressed in seedling roots and leaves. Expressed in the stigma, funiculus, and vascular bundles in sepals, petals and stamens.

It catalyses the reaction (indol-3-yl)acetate + S-adenosyl-L-methionine = methyl (indol-3-yl)acetate + S-adenosyl-L-homocysteine. Functionally, catalyzes the methylation of the free carboxyl end of the plant hormone indole-3-acetic acid (IAA). Converts IAA to IAA methyl ester (MeIAA). Regulates IAA activities by IAA methylation. Methylation of IAA plays an important role in regulating plant development and auxin homeostasis. Required for correct leaf pattern formation. MeIAA seems to be an inactive form of IAA. This is Indole-3-acetate O-methyltransferase 1 (IAMT1) from Arabidopsis thaliana (Mouse-ear cress).